A 259-amino-acid polypeptide reads, in one-letter code: MHATGLAAPAGTPRLRKWPSKRRVPVSQPGMADPHQFFDDTSSAPSRGYGGQPSPGSLGYPTSSSEAAFLAAPMSNMAMAYGSSLAAQGKELVDKNIDRFIPVSKLKYYFAVDTVYVGKKLGLLVFPYLHQDWEVQYQQDTPVAPRFDINAPDLYIPAMAFITYILVAGLALGTQDRMIGGVLTGLLFGKIGYYLVLAWCCVSIFVFMIRTLRLKILAQAAAEGVPVRGARNQLRMYLTMAVAAAQPVLMYWLTFHLVR.

Met-1 bears the N-acetylmethionine mark. The interval 1 to 61 (MHATGLAAPA…QPSPGSLGYP (61 aa)) is disordered. Over 9-153 (PAGTPRLRKW…APRFDINAPD (145 aa)) the chain is Cytoplasmic. Thr-12 is subject to Phosphothreonine. Residues 14 to 24 (RLRKWPSKRRV) show a composition bias toward basic residues. Ser-64 is modified (phosphoserine). Residues 154–174 (LYIPAMAFITYILVAGLALGT) form a helical membrane-spanning segment. Residues 175 to 186 (QDRMIGGVLTGL) are Extracellular-facing. The helical transmembrane segment at 187–207 (LFGKIGYYLVLAWCCVSIFVF) threads the bilayer. The Cytoplasmic portion of the chain corresponds to 208 to 237 (MIRTLRLKILAQAAAEGVPVRGARNQLRMY). A helical membrane pass occupies residues 238-258 (LTMAVAAAQPVLMYWLTFHLV). Arg-259 is a topological domain (extracellular).

The protein belongs to the YIF1 family. Interacts with HTR1A (via C-terminus). Interacts with ABCB9 (via TMD0); this interaction allows (but is not essential) the ER-to-Golgi trafficking and strongly depends on a salt bridge within TMD0. Highly expressed in brain. Expressed in heart, kidney, and lung and lower levels in spleen, muscle, and intestine (at protein level). Expressed in serotoninergic neurons (at protein level).

The protein localises to the endoplasmic reticulum membrane. The protein resides in the golgi apparatus membrane. Its subcellular location is the endoplasmic reticulum-Golgi intermediate compartment membrane. Its function is as follows. Functions in endoplasmic reticulum to Golgi vesicle-mediated transport and regulates the proper organization of the endoplasmic reticulum and the Golgi. Plays a key role in targeting to neuronal dendrites receptors such as HTR1A. Plays also a role in primary cilium and sperm flagellum assembly probably through protein transport to these compartments. This is Protein YIF1B from Rattus norvegicus (Rat).